The chain runs to 338 residues: 1-aminocyclopropane-1-carboxylate deaminase (338 aa).

The residue at position 51 (Lys51) is an N6-(pyridoxal phosphate)lysine. Catalysis depends on Ser78, which acts as the Nucleophile.

The protein belongs to the ACC deaminase/D-cysteine desulfhydrase family. As to quaternary structure, homotrimer. Pyridoxal 5'-phosphate serves as cofactor.

The enzyme catalyses 1-aminocyclopropane-1-carboxylate + H2O = 2-oxobutanoate + NH4(+). Its function is as follows. Catalyzes a cyclopropane ring-opening reaction, the irreversible conversion of 1-aminocyclopropane-1-carboxylate (ACC) to ammonia and alpha-ketobutyrate. Allows growth on ACC as a nitrogen source. In Pseudomonas syringae pv. syringae (strain B728a), this protein is 1-aminocyclopropane-1-carboxylate deaminase.